Here is a 270-residue protein sequence, read N- to C-terminus: Formamidopyrimidine-DNA glycosylase (270 aa).

Residue Pro-2 is the Schiff-base intermediate with DNA of the active site. Glu-3 acts as the Proton donor in catalysis. The Proton donor; for beta-elimination activity role is filled by Lys-59. Residues His-91, Arg-110, and Lys-151 each coordinate DNA. Residues 236 to 270 form an FPG-type zinc finger; it reads RVYGRDKEPCVTCGQQVKSKVLGGRNTFWCSRCQK. Residue Arg-260 is the Proton donor; for delta-elimination activity of the active site.

This sequence belongs to the FPG family. Monomer. Zn(2+) serves as cofactor.

The catalysed reaction is Hydrolysis of DNA containing ring-opened 7-methylguanine residues, releasing 2,6-diamino-4-hydroxy-5-(N-methyl)formamidopyrimidine.. The enzyme catalyses 2'-deoxyribonucleotide-(2'-deoxyribose 5'-phosphate)-2'-deoxyribonucleotide-DNA = a 3'-end 2'-deoxyribonucleotide-(2,3-dehydro-2,3-deoxyribose 5'-phosphate)-DNA + a 5'-end 5'-phospho-2'-deoxyribonucleoside-DNA + H(+). In terms of biological role, involved in base excision repair of DNA damaged by oxidation or by mutagenic agents. Acts as a DNA glycosylase that recognizes and removes damaged bases. Has a preference for oxidized purines, such as 7,8-dihydro-8-oxoguanine (8-oxoG). Has AP (apurinic/apyrimidinic) lyase activity and introduces nicks in the DNA strand. Cleaves the DNA backbone by beta-delta elimination to generate a single-strand break at the site of the removed base with both 3'- and 5'-phosphates. This chain is Formamidopyrimidine-DNA glycosylase, found in Bdellovibrio bacteriovorus (strain ATCC 15356 / DSM 50701 / NCIMB 9529 / HD100).